Consider the following 297-residue polypeptide: 33 kDa chaperonin (297 aa).

Intrachain disulfides connect C232–C234 and C266–C269.

It belongs to the HSP33 family. Post-translationally, under oxidizing conditions two disulfide bonds are formed involving the reactive cysteines. Under reducing conditions zinc is bound to the reactive cysteines and the protein is inactive.

It localises to the cytoplasm. Its function is as follows. Redox regulated molecular chaperone. Protects both thermally unfolding and oxidatively damaged proteins from irreversible aggregation. Plays an important role in the bacterial defense system toward oxidative stress. This Pseudomonas aeruginosa (strain LESB58) protein is 33 kDa chaperonin.